Here is a 553-residue protein sequence, read N- to C-terminus: MSERIFIGVAWPYANSQLHLGHVAGAYLPADIFARYHRTRGDEVLMVSGSDMHGTPITIRAEQEGITAAEVAERYHQRFMASWPKLGISWDFYTSTATANHARTAQEMFLSLYEKGYIYKNTVCQPFCSHCNRFLPDRYVEGTCPHCKYEGARGDQCDNCGKPLNAAELLNFRCKNCGNPPEFRETEHFFLKLSAFEEELIRWVETKTHWRTNVLNFTLRYLKEGLKDRAITRDLDWGVPLPLPGYEGKRLYVWFEAVIGYLSASKEWAASKGQPNAWQKYWGGDTKSYYFIGKDNIPFHTIIWPAMLMGKGGLNLPYDVPSNEYLTTESQKFSKSRNNAIWVDDVLSRYGVDTLRYLLSANMPESSDTDFSWREFVRRNNDELVATYGNLAQRVLTMVCRNYDNKVPEYGELDERSLTLIEKTAAMLCETDKALYNCNFREAIRLAMALAQEANRYLDEKAPWKEIKVDKAAAARSLYVAMVALSGLRVAFYPFLPESSGRLSTYLGFGSELEKESWILKMPVVGQELTPPEPLFKKLEDSVVEEETARMGL.

The 'HIGH' region signature appears at 12 to 22 (PYANSQLHLGH). The Zn(2+) site is built by Cys144, Cys147, Cys157, and Cys160. Positions 332-336 (KFSKS) match the 'KMSKS' region motif. Lys335 lines the ATP pocket.

It belongs to the class-I aminoacyl-tRNA synthetase family. MetG type 1 subfamily. Monomer. The cofactor is Zn(2+).

The protein localises to the cytoplasm. The catalysed reaction is tRNA(Met) + L-methionine + ATP = L-methionyl-tRNA(Met) + AMP + diphosphate. In terms of biological role, is required not only for elongation of protein synthesis but also for the initiation of all mRNA translation through initiator tRNA(fMet) aminoacylation. The polypeptide is Methionine--tRNA ligase (Dehalococcoides mccartyi (strain CBDB1)).